The sequence spans 205 residues: Transcriptional regulator GfcR (205 aa).

This sequence belongs to the purine/pyrimidine phosphoribosyltransferase family. GfcR subfamily.

This Methanococcus vannielii (strain ATCC 35089 / DSM 1224 / JCM 13029 / OCM 148 / SB) protein is Transcriptional regulator GfcR.